The primary structure comprises 71 residues: AKMSLSSYILILTLVLFSQGILLSASKSIRNLEDDMVFNTFRLGKAFQKEDTAEKSVVAPSLEQYKNDENS.

A signal peptide spans 1-20; that stretch reads AKMSLSSYILILTLVLFSQG.

This sequence belongs to the melanin-concentrating hormone family.

It localises to the secreted. The protein is Pro-MCH (PMCH) of Carlito syrichta (Philippine tarsier).